The chain runs to 854 residues: uncharacterized protein (854 aa).

The protein belongs to the PEP-utilizing enzyme family.

This is an uncharacterized protein from Mycobacterium tuberculosis (strain CDC 1551 / Oshkosh).